Consider the following 1401-residue polypeptide: Enhancer of mRNA-decapping protein 4 (1401 aa).

Residue A2 is modified to N-acetylalanine. Residues S3 and S6 each carry the phosphoserine modification. Positions 23-42 (DRPAGGPSAESPRPSSAYNG) are disordered. 7 WD repeats span residues 121 to 164 (QPVA…VISV), 167 to 206 (SERTLLKGFTGSVADLAFAHLNSPQLACLDEAGNLFVWRL), 217 to 269 (ILVH…VWDL), 287 to 326 (KQGFIVVKGHSTCLSEGALSPDGTVLATASHDGYVKFWQI), 335 to 385 (RCLH…MWCT), 389 to 426 (TCLQTIRFSPDIFSSVSVPPSLKVCLDLSAEYLILSDV), and 432 to 475 (YVME…LRHT). K125 bears the N6-acetyllysine mark. Residues 545–565 (TFGESRPELGSEGLGSAAHGS) are disordered. Phosphoserine occurs at positions 560, 565, 583, and 585. 2 disordered regions span residues 603-628 (ASLQQITASPSSSSSGSSSSSSSSSS) and 662-702 (DGSL…QVPT). The span at 609-628 (TASPSSSSSGSSSSSSSSSS) shows a compositional bias: low complexity. Positions 663–675 (GSLTMSSSGSLQA) are enriched in polar residues. A Phosphoserine modification is found at S676. A compositionally biased stretch (low complexity) spans 677–689 (PRGLLPGLLPAPA). T693 bears the Phosphothreonine mark. A phosphoserine mark is found at S708, S723, and S725. Disordered stretches follow at residues 717-741 (LGLPQASPSRTRSPDVISSASTALS) and 778-808 (LLSPRPRPGPELGPQLGLDGGPGDGDRHNTP). Residues 722 to 741 (ASPSRTRSPDVISSASTALS) are compositionally biased toward polar residues. T727 is modified (phosphothreonine). A phosphoserine mark is found at S729 and S741. T821 is modified (phosphothreonine). 7 positions are modified to phosphoserine: S844, S871, S875, S879, S887, S890, and S892. Residues 868–946 (QRDSQDASAE…RLTEHQVAEP (79 aa)) form a disordered region. A sufficient for nuclear localization region spans residues 913-934 (GSPRTSPKLKRKSKKDDGDAAM). Residues 954–1025 (IWQQQRELAE…GGQLQEQLTQ (72 aa)) are a coiled coil. S967 and S1380 each carry phosphoserine.

The protein belongs to the WD repeat EDC4 family. In terms of assembly, part of a decapping complex consisting of DCP1A, DCP2, EDC3, EDC4 and probably DDX6. Part of a complex consisting of DCP1A, EDC3, EDC4 and DDX6. Part of a complex consisting of DCP1B, EDC3, EDC4 and DDX6. Interacts with DCP2. Interacts with RC3H1. Interacts with NBDY. Interacts with TEX19. Interacts with LSM14A. Interacts with DDX6. As to quaternary structure, (Microbial infection) Interacts with rotavirus A non-structural protein 2; this interaction probably plays a role in the sequestration of EDC4 in viral factories. Interacts with rotavirus A non-structural protein 5; this interaction probably plays a role in its sequestration in viral factories.

It localises to the cytoplasm. Its subcellular location is the P-body. The protein resides in the nucleus. In terms of biological role, in the process of mRNA degradation, seems to play a role in mRNA decapping. Component of a complex containing DCP2 and DCP1A which functions in decapping of ARE-containing mRNAs. Promotes complex formation between DCP1A and DCP2. Enhances the catalytic activity of DCP2 (in vitro). The sequence is that of Enhancer of mRNA-decapping protein 4 (EDC4) from Homo sapiens (Human).